We begin with the raw amino-acid sequence, 83 residues long: Retinal cone rhodopsin-sensitive cGMP 3',5'-cyclic phosphodiesterase subunit gamma (83 aa).

Residues 1–17 show a composition bias toward polar residues; the sequence is MSDNTVLAPPTSNQGPT. The tract at residues 1–51 is disordered; that stretch reads MSDNTVLAPPTSNQGPTTPRKGPPKFKQRQTRQFKSKPPKKGVKGFGDDIP. A compositionally biased stretch (basic residues) spans 22 to 43; that stretch reads GPPKFKQRQTRQFKSKPPKKGV.

Belongs to the rod/cone cGMP-PDE gamma subunit family. As to quaternary structure, tetramer composed of two catalytic chains (alpha and beta), and two inhibitory chains (gamma).

It catalyses the reaction 3',5'-cyclic GMP + H2O = GMP + H(+). Functionally, participates in processes of transmission and amplification of the visual signal. cGMP-PDEs are the effector molecules in G-protein-mediated phototransduction in vertebrate rods and cones. The polypeptide is Retinal cone rhodopsin-sensitive cGMP 3',5'-cyclic phosphodiesterase subunit gamma (PDE6H) (Bos taurus (Bovine)).